The following is a 637-amino-acid chain: tRNA uridine 5-carboxymethylaminomethyl modification enzyme MnmG (637 aa).

Glycine 14–glycine 19 lines the FAD pocket. Glycine 279–phenylalanine 293 lines the NAD(+) pocket.

Belongs to the MnmG family. In terms of assembly, homodimer. Heterotetramer of two MnmE and two MnmG subunits. The cofactor is FAD.

Its subcellular location is the cytoplasm. Its function is as follows. NAD-binding protein involved in the addition of a carboxymethylaminomethyl (cmnm) group at the wobble position (U34) of certain tRNAs, forming tRNA-cmnm(5)s(2)U34. The sequence is that of tRNA uridine 5-carboxymethylaminomethyl modification enzyme MnmG from Desulfitobacterium hafniense (strain DSM 10664 / DCB-2).